The primary structure comprises 278 residues: Putative cysteine-rich repeat secretory protein 19 (278 aa).

The signal sequence occupies residues 1 to 32 (MYSSSSVSKRFVLVPIVVVVTTQLLLVRNVSS). Gnk2-homologous domains lie at 39–147 (YLHH…SLDT) and 160–267 (PSAK…LYPF).

The protein belongs to the cysteine-rich repeat secretory protein family.

The protein localises to the secreted. The polypeptide is Putative cysteine-rich repeat secretory protein 19 (CRRSP19) (Arabidopsis thaliana (Mouse-ear cress)).